Consider the following 358-residue polypeptide: Acyl-CoA desaturase 1 (358 aa).

At 1–71 (MPAHMLQEIS…EGPPPKLEYV (71 aa)) the chain is on the cytoplasmic side. Positions 8–24 (EISSSYTTTTTITEPPS) are enriched in low complexity. Residues 8–33 (EISSSYTTTTTITEPPSGNLQNGREK) are disordered. A helical membrane pass occupies residues 72–92 (WRNIILMALLHVGALYGITLI). A substrate-binding site is contributed by N74. The Lumenal portion of the chain corresponds to 93-96 (PSSK). Residues 97–117 (VYTLLWGIFYYLISALGITAG) traverse the membrane as a helical segment. Residues 118–216 (AHRLWSHRTY…EKLVMFQRRY (99 aa)) are Cytoplasmic-facing. Residues H119 and H124 each contribute to the Fe cation site. The short motif at 119-124 (HRLWSH) is the Histidine box-1 element. The substrate site is built by N147, R154, and D155. The Fe cation site is built by H156, H159, and H160. The short motif at 156–160 (HRAHH) is the Histidine box-2 element. Substrate-binding residues include R187 and K188. A helical transmembrane segment spans residues 217–236 (YKPGLLLMCFILPTLVPWYC). The Lumenal portion of the chain corresponds to 237–240 (WGET). The helical transmembrane segment at 241–262 (FLHSLFVSTFLRYTLVLNATWL) threads the bilayer. W261 lines the substrate pocket. Over 263–358 (VNSAAHLYGY…RTGDGSHKSS (96 aa)) the chain is Cytoplasmic. Positions 268, 297, 300, and 301 each coordinate Fe cation. Positions 297-301 (HNYHH) match the Histidine box-3 motif.

Belongs to the fatty acid desaturase type 1 family. Fe(2+) serves as cofactor. Detected in liver (at protein level). Detected in adipose tissue. Detected in liver when rats are kept on a fat-free diet, but not when their food contains unsaturated fatty acids.

Its subcellular location is the endoplasmic reticulum membrane. It is found in the membrane. The enzyme catalyses octadecanoyl-CoA + 2 Fe(II)-[cytochrome b5] + O2 + 2 H(+) = (9Z)-octadecenoyl-CoA + 2 Fe(III)-[cytochrome b5] + 2 H2O. Functionally, stearoyl-CoA desaturase that utilizes O(2) and electrons from reduced cytochrome b5 to introduce the first double bond into saturated fatty acyl-CoA substrates. Catalyzes the insertion of a cis double bond at the Delta-9 position into fatty acyl-CoA substrates including palmitoyl-CoA and stearoyl-CoA. Gives rise to a mixture of 16:1 and 18:1 unsaturated fatty acids. Plays an important role in lipid biosynthesis. Plays an important role in regulating the expression of genes that are involved in lipogenesis and in regulating mitochondrial fatty acid oxidation. Plays an important role in body energy homeostasis. Contributes to the biosynthesis of membrane phospholipids, cholesterol esters and triglycerides. Required for normal development of sebaceous glands. Required for the biosynthesis of normal levels of Delta-9 unsaturated fatty acids and 1-alkyl-2,3-diacylglycerol in the Harderian gland. Required for normal production of meibum, an oily material that prevents drying of the cornea. The chain is Acyl-CoA desaturase 1 (Scd1) from Rattus norvegicus (Rat).